The following is an 859-amino-acid chain: Outer membrane usher protein AfaC (859 aa).

A signal peptide spans 1–28 (MRDTSSGRMRTGVTGLALAVMVACVMFR).

This sequence belongs to the fimbrial export usher family.

Its subcellular location is the cell outer membrane. In terms of biological role, involved in the export and assembly of AFA-III afimbrial adhesin subunits across the outer membrane. This chain is Outer membrane usher protein AfaC (afaC), found in Escherichia coli.